The following is a 504-amino-acid chain: Histidine ammonia-lyase (504 aa).

The 5-imidazolinone (Ala-Gly) cross-link spans 142-144 (ASG). A 2,3-didehydroalanine (Ser) modification is found at serine 143.

This sequence belongs to the PAL/histidase family. In terms of processing, contains an active site 4-methylidene-imidazol-5-one (MIO), which is formed autocatalytically by cyclization and dehydration of residues Ala-Ser-Gly.

The protein localises to the cytoplasm. The catalysed reaction is L-histidine = trans-urocanate + NH4(+). Its pathway is amino-acid degradation; L-histidine degradation into L-glutamate; N-formimidoyl-L-glutamate from L-histidine: step 1/3. The chain is Histidine ammonia-lyase from Staphylococcus aureus (strain bovine RF122 / ET3-1).